Consider the following 173-residue polypeptide: Shikimate kinase (173 aa).

An ATP-binding site is contributed by 14-19 (GAGKST). Serine 18 contacts Mg(2+). Residues aspartate 36, arginine 60, and glycine 82 each contribute to the substrate site. Residue lysine 120 participates in ATP binding. Residue arginine 140 participates in substrate binding.

Belongs to the shikimate kinase family. Monomer. It depends on Mg(2+) as a cofactor.

It localises to the cytoplasm. It catalyses the reaction shikimate + ATP = 3-phosphoshikimate + ADP + H(+). Its pathway is metabolic intermediate biosynthesis; chorismate biosynthesis; chorismate from D-erythrose 4-phosphate and phosphoenolpyruvate: step 5/7. Its function is as follows. Catalyzes the specific phosphorylation of the 3-hydroxyl group of shikimic acid using ATP as a cosubstrate. The polypeptide is Shikimate kinase (aroK) (Wigglesworthia glossinidia brevipalpis).